Consider the following 656-residue polypeptide: tRNA 5-methylaminomethyl-2-thiouridine biosynthesis bifunctional protein MnmC (656 aa).

The interval Met-1–Ala-236 is tRNA (mnm(5)s(2)U34)-methyltransferase. Positions Ile-260–Ser-656 are FAD-dependent cmnm(5)s(2)U34 oxidoreductase.

It in the N-terminal section; belongs to the methyltransferase superfamily. tRNA (mnm(5)s(2)U34)-methyltransferase family. This sequence in the C-terminal section; belongs to the DAO family. FAD is required as a cofactor.

The protein localises to the cytoplasm. The catalysed reaction is 5-aminomethyl-2-thiouridine(34) in tRNA + S-adenosyl-L-methionine = 5-methylaminomethyl-2-thiouridine(34) in tRNA + S-adenosyl-L-homocysteine + H(+). Catalyzes the last two steps in the biosynthesis of 5-methylaminomethyl-2-thiouridine (mnm(5)s(2)U) at the wobble position (U34) in tRNA. Catalyzes the FAD-dependent demodification of cmnm(5)s(2)U34 to nm(5)s(2)U34, followed by the transfer of a methyl group from S-adenosyl-L-methionine to nm(5)s(2)U34, to form mnm(5)s(2)U34. The chain is tRNA 5-methylaminomethyl-2-thiouridine biosynthesis bifunctional protein MnmC from Paraburkholderia xenovorans (strain LB400).